We begin with the raw amino-acid sequence, 586 residues long: Nucleus accumbens-associated protein 2 (586 aa).

Residues 30–94 (CDVSIVVKGQ…CYTGKLTMAA (65 aa)) enclose the BTB domain. K171 participates in a covalent cross-link: Glycyl lysine isopeptide (Lys-Gly) (interchain with G-Cter in SUMO2). The tract at residues 177–196 (MPPASGPGLASKRPLETGPR) is disordered. K215 participates in a covalent cross-link: Glycyl lysine isopeptide (Lys-Gly) (interchain with G-Cter in SUMO2). The disordered stretch occupies residues 236–272 (QVPYPPGERTSPGASSLPTTDSPTSYHNEEDEEDDEA). The span at 247–261 (PGASSLPTTDSPTSY) shows a compositional bias: polar residues. Glycyl lysine isopeptide (Lys-Gly) (interchain with G-Cter in SUMO2) cross-links involve residues K297, K427, and K454. The region spanning 349 to 446 (GSGVYITRGQ…DMCTNARRVR (98 aa)) is the BEN domain. The interval 542–586 (APEQLPADGQSSPQAFEQGNTSSSRPQTPVATATRRPEGTYAGTL) is disordered. The span at 550 to 572 (GQSSPQAFEQGNTSSSRPQTPVA) shows a compositional bias: polar residues.

In terms of assembly, homooligomer; mediated by the BTB domain. Interacts with the NuRD complex. Interacts (via C-terminal part) with HDAC2. Interacts (via BTB domain) with MTA1, MTA2 and MTA3.

Its subcellular location is the nucleus. Functionally, functions as a transcriptional repressor through its association with the NuRD complex. Recruits the NuRD complex to the promoter of MDM2, leading to the repression of MDM2 transcription and subsequent stability of p53/TP53. This is Nucleus accumbens-associated protein 2 (Nacc2) from Mus musculus (Mouse).